Consider the following 229-residue polypeptide: Deoxyribose-phosphate aldolase (229 aa).

Residue aspartate 96 is the Proton donor/acceptor of the active site. Lysine 166 acts as the Schiff-base intermediate with acetaldehyde in catalysis. The active-site Proton donor/acceptor is the lysine 195.

Belongs to the DeoC/FbaB aldolase family. DeoC type 1 subfamily.

The protein localises to the cytoplasm. It carries out the reaction 2-deoxy-D-ribose 5-phosphate = D-glyceraldehyde 3-phosphate + acetaldehyde. It functions in the pathway carbohydrate degradation; 2-deoxy-D-ribose 1-phosphate degradation; D-glyceraldehyde 3-phosphate and acetaldehyde from 2-deoxy-alpha-D-ribose 1-phosphate: step 2/2. Its function is as follows. Catalyzes a reversible aldol reaction between acetaldehyde and D-glyceraldehyde 3-phosphate to generate 2-deoxy-D-ribose 5-phosphate. This Micrococcus luteus (strain ATCC 4698 / DSM 20030 / JCM 1464 / CCM 169 / CCUG 5858 / IAM 1056 / NBRC 3333 / NCIMB 9278 / NCTC 2665 / VKM Ac-2230) (Micrococcus lysodeikticus) protein is Deoxyribose-phosphate aldolase.